We begin with the raw amino-acid sequence, 358 residues long: Phospho-N-acetylmuramoyl-pentapeptide-transferase (358 aa).

The next 10 membrane-spanning stretches (helical) occupy residues 3–23 (QILF…PALI), 54–74 (GVAI…IGIA), 84–104 (ALLV…DDFI), 114–134 (LTAA…GVLA), 156–176 (ITTV…VVVA), 187–207 (LDGL…IITF), 231–251 (LALV…WNAA), 255–275 (IFMG…LSIT), 283–303 (VVIG…VAVF), and 330–350 (VIIR…GLFY).

The protein belongs to the glycosyltransferase 4 family. MraY subfamily. Requires Mg(2+) as cofactor.

It localises to the cell membrane. It carries out the reaction UDP-N-acetyl-alpha-D-muramoyl-L-alanyl-gamma-D-glutamyl-meso-2,6-diaminopimeloyl-D-alanyl-D-alanine + di-trans,octa-cis-undecaprenyl phosphate = di-trans,octa-cis-undecaprenyl diphospho-N-acetyl-alpha-D-muramoyl-L-alanyl-D-glutamyl-meso-2,6-diaminopimeloyl-D-alanyl-D-alanine + UMP. It participates in cell wall biogenesis; peptidoglycan biosynthesis. Its function is as follows. Catalyzes the initial step of the lipid cycle reactions in the biosynthesis of the cell wall peptidoglycan: transfers peptidoglycan precursor phospho-MurNAc-pentapeptide from UDP-MurNAc-pentapeptide onto the lipid carrier undecaprenyl phosphate, yielding undecaprenyl-pyrophosphoryl-MurNAc-pentapeptide, known as lipid I. The chain is Phospho-N-acetylmuramoyl-pentapeptide-transferase from Nocardia farcinica (strain IFM 10152).